We begin with the raw amino-acid sequence, 428 residues long: Tyrosine--tRNA ligase (428 aa).

Residue Y41 participates in L-tyrosine binding. The 'HIGH' region motif lies at 46–55; it reads PTADSLHLGH. 2 residues coordinate L-tyrosine: Y179 and Q183. The 'KMSKS' region motif lies at 239 to 243; that stretch reads KFGKT. An ATP-binding site is contributed by K242. The S4 RNA-binding domain maps to 361–418; sequence ADLMQALVDSELQPSRGQARKTIASNAITINGEKQSDPEYTFSDSDRLFGRYTLLRRG.

This sequence belongs to the class-I aminoacyl-tRNA synthetase family. TyrS type 1 subfamily. In terms of assembly, homodimer.

It localises to the cytoplasm. It carries out the reaction tRNA(Tyr) + L-tyrosine + ATP = L-tyrosyl-tRNA(Tyr) + AMP + diphosphate + H(+). Catalyzes the attachment of tyrosine to tRNA(Tyr) in a two-step reaction: tyrosine is first activated by ATP to form Tyr-AMP and then transferred to the acceptor end of tRNA(Tyr). This Cronobacter sakazakii (strain ATCC BAA-894) (Enterobacter sakazakii) protein is Tyrosine--tRNA ligase.